A 154-amino-acid polypeptide reads, in one-letter code: uncharacterized protein (154 aa).

A signal peptide spans 1–33 (MTKRGIQAFAGGIILATAVLAAVFYLTDEDQAA).

This is an uncharacterized protein from Bacillus subtilis (strain 168).